The following is a 212-amino-acid chain: Probable nicotinate-nucleotide adenylyltransferase (212 aa).

It belongs to the NadD family.

It carries out the reaction nicotinate beta-D-ribonucleotide + ATP + H(+) = deamido-NAD(+) + diphosphate. It participates in cofactor biosynthesis; NAD(+) biosynthesis; deamido-NAD(+) from nicotinate D-ribonucleotide: step 1/1. Its function is as follows. Catalyzes the reversible adenylation of nicotinate mononucleotide (NaMN) to nicotinic acid adenine dinucleotide (NaAD). The protein is Probable nicotinate-nucleotide adenylyltransferase of Chromobacterium violaceum (strain ATCC 12472 / DSM 30191 / JCM 1249 / CCUG 213 / NBRC 12614 / NCIMB 9131 / NCTC 9757 / MK).